Consider the following 426-residue polypeptide: Chaperone SurA (426 aa).

The signal sequence occupies residues 1–13; sequence MLGALFLSTAASA. PpiC domains are found at residues 164–265 and 274–373; these read SEEL…KLLD and RDEV…EVLG.

Its subcellular location is the periplasm. It carries out the reaction [protein]-peptidylproline (omega=180) = [protein]-peptidylproline (omega=0). Its function is as follows. Chaperone involved in the correct folding and assembly of outer membrane proteins. Recognizes specific patterns of aromatic residues and the orientation of their side chains, which are found more frequently in integral outer membrane proteins. May act in both early periplasmic and late outer membrane-associated steps of protein maturation. The chain is Chaperone SurA from Pseudomonas fluorescens (strain ATCC BAA-477 / NRRL B-23932 / Pf-5).